The primary structure comprises 233 residues: ATP synthase subunit a (233 aa).

7 helical membrane passes run 29–49 (FKHV…SFIV), 60–80 (LQNI…SITG), 89–109 (VLIV…VPGF), 115–135 (NINT…YIGI), 143–163 (IKHF…LELI), 185–205 (FVLI…IYFL), and 206–226 (FTLA…IYLK).

It belongs to the ATPase A chain family. As to quaternary structure, F-type ATPases have 2 components, CF(1) - the catalytic core - and CF(0) - the membrane proton channel. CF(1) has five subunits: alpha(3), beta(3), gamma(1), delta(1), epsilon(1). CF(0) has three main subunits: a(1), b(2) and c(9-12). The alpha and beta chains form an alternating ring which encloses part of the gamma chain. CF(1) is attached to CF(0) by a central stalk formed by the gamma and epsilon chains, while a peripheral stalk is formed by the delta and b chains.

It localises to the cell inner membrane. Its function is as follows. Key component of the proton channel; it plays a direct role in the translocation of protons across the membrane. This Oleidesulfovibrio alaskensis (strain ATCC BAA-1058 / DSM 17464 / G20) (Desulfovibrio alaskensis) protein is ATP synthase subunit a.